Reading from the N-terminus, the 172-residue chain is Small ribosomal subunit protein uS5 (172 aa).

The S5 DRBM domain occupies 16–79 (LKDRLVAINR…ESAKKNLTRV (64 aa)).

The protein belongs to the universal ribosomal protein uS5 family. As to quaternary structure, part of the 30S ribosomal subunit. Contacts proteins S4 and S8.

With S4 and S12 plays an important role in translational accuracy. Functionally, located at the back of the 30S subunit body where it stabilizes the conformation of the head with respect to the body. The chain is Small ribosomal subunit protein uS5 from Bacteroides fragilis (strain ATCC 25285 / DSM 2151 / CCUG 4856 / JCM 11019 / LMG 10263 / NCTC 9343 / Onslow / VPI 2553 / EN-2).